The chain runs to 209 residues: Protein GET1 (209 aa).

The Lumenal segment spans residues Met1–Leu3. Residues Leu4 to Lys23 form a helical membrane-spanning segment. The Cytoplasmic segment spans residues Thr24 to Arg110. The stretch at Trp74–Ser101 forms a coiled coil. Residues Trp111–Phe131 traverse the membrane as a helical segment. Residues Trp132–Ser155 lie on the Lumenal side of the membrane. The chain crosses the membrane as a helical span at residues Val156–Val172. Residues Ile173 to Leu209 are Cytoplasmic-facing. The interval Met188–Leu209 is disordered.

It belongs to the WRB/GET1 family. Interacts with GET3.

It is found in the endoplasmic reticulum membrane. In terms of biological role, required for the post-translational delivery of tail-anchored (TA) proteins to the endoplasmic reticulum. Acts as a membrane receptor for soluble GET3, which recognizes and selectively binds the transmembrane domain of TA proteins in the cytosol. This Chaetomium thermophilum (strain DSM 1495 / CBS 144.50 / IMI 039719) (Thermochaetoides thermophila) protein is Protein GET1.